The chain runs to 159 residues: Ribosomal RNA large subunit methyltransferase H (159 aa).

Residues Leu-76, Gly-108, and 127–132 (FSKMTF) each bind S-adenosyl-L-methionine.

It belongs to the RNA methyltransferase RlmH family. Homodimer.

It localises to the cytoplasm. The enzyme catalyses pseudouridine(1915) in 23S rRNA + S-adenosyl-L-methionine = N(3)-methylpseudouridine(1915) in 23S rRNA + S-adenosyl-L-homocysteine + H(+). Its function is as follows. Specifically methylates the pseudouridine at position 1915 (m3Psi1915) in 23S rRNA. The sequence is that of Ribosomal RNA large subunit methyltransferase H from Clostridium botulinum (strain Langeland / NCTC 10281 / Type F).